Reading from the N-terminus, the 190-residue chain is Elongation factor P-like protein (190 aa).

Belongs to the elongation factor P family.

In Escherichia fergusonii (strain ATCC 35469 / DSM 13698 / CCUG 18766 / IAM 14443 / JCM 21226 / LMG 7866 / NBRC 102419 / NCTC 12128 / CDC 0568-73), this protein is Elongation factor P-like protein.